A 557-amino-acid chain; its full sequence is Leucine-rich glioma-inactivated protein 1 (557 aa).

A signal peptide spans 1 to 34; sequence MESERSKRMGNACIPLKRIAYFLCLLSALLLTEG. Residues 35–72 enclose the LRRNT domain; sequence KKPAKPKCPAVCTCTKDNALCENARSIPRTVPPDVISL. LRR repeat units follow at residues 92-113, 116-137, and 140-161; these read SLQLLLFTSNSFDVISDDAFIG, HLEYLFIENNNIKSISRHTFRG, and SLIHLSLANNNLQTLPKDIFKG. The LRRCT domain maps to 173-223; sequence NSFNCDCKLKWLVEWLGHTNATVEDIYCEGPPEYKKRKINSLSSKDFDCII. The N-linked (GlcNAc...) asparagine glycan is linked to N192. EAR repeat units lie at residues 225 to 267, 271 to 313, 317 to 364, 366 to 415, 419 to 462, 464 to 506, and 510 to 552; these read EFAK…EWDH, TFRN…KRDS, KFIK…KWNG, GFYS…QWNK, SFTN…KWGG, SFQD…NWDA, and KFVK…KHVI. N277 carries N-linked (GlcNAc...) asparagine glycosylation. An N-linked (GlcNAc...) asparagine glycan is attached at N422.

In terms of assembly, oligomer. Interacts with KCNA1 within a complex containing KCNA1, KCNA4 and KCNAB1. Part of a complex containing ADAM22, DLG4/PSD95 and CACNG2 (stargazin). Can bind to ADAM11 and ADAM23. Glycosylated.

It is found in the secreted. Its subcellular location is the synapse. The protein resides in the cytoplasm. In terms of biological role, regulates voltage-gated potassium channels assembled from KCNA1, KCNA4 and KCNAB1. It slows down channel inactivation by precluding channel closure mediated by the KCNAB1 subunit. Ligand for ADAM22 that positively regulates synaptic transmission mediated by AMPA-type glutamate receptors. Plays a role in suppressing the production of MMP1/3 through the phosphatidylinositol 3-kinase/ERK pathway. The polypeptide is Leucine-rich glioma-inactivated protein 1 (LGI1) (Pan troglodytes (Chimpanzee)).